The following is a 249-amino-acid chain: Probable transcriptional regulatory protein Meso_3192 (249 aa).

Belongs to the TACO1 family.

The protein resides in the cytoplasm. The polypeptide is Probable transcriptional regulatory protein Meso_3192 (Chelativorans sp. (strain BNC1)).